The sequence spans 300 residues: Cation-efflux pump FieF (300 aa).

4 helical membrane-spanning segments follow: residues 12 to 32 (AALS…FAWW), 40 to 60 (LAAL…LFVV), 82 to 102 (AALA…LTGF), and 114 to 134 (PGLG…LVTF). Zn(2+) is bound by residues D45 and D49. Residues H153 and D157 each contribute to the Zn(2+) site. The helical transmembrane segment at 164–184 (ILIALALSWYGFHRADALFAL) threads the bilayer.

This sequence belongs to the cation diffusion facilitator (CDF) transporter (TC 2.A.4) family. FieF subfamily. In terms of assembly, homodimer.

The protein resides in the cell inner membrane. It carries out the reaction Zn(2+)(in) + H(+)(out) = Zn(2+)(out) + H(+)(in). It catalyses the reaction Cd(2+)(in) + H(+)(out) = Cd(2+)(out) + H(+)(in). The catalysed reaction is Fe(2+)(in) + H(+)(out) = Fe(2+)(out) + H(+)(in). Its function is as follows. Divalent metal cation transporter which exports Zn(2+), Cd(2+) and possibly Fe(2+). May be involved in zinc and iron detoxification by efflux. The protein is Cation-efflux pump FieF of Yersinia enterocolitica serotype O:8 / biotype 1B (strain NCTC 13174 / 8081).